A 307-amino-acid chain; its full sequence is Cytidine deaminase 7 (307 aa).

CMP/dCMP-type deaminase domains are found at residues 22–155 and 185–307; these read TEPI…FTPD and SDCS…FITE. 63-65 contributes to the substrate binding site; that stretch reads NVE. Histidine 76 lines the Zn(2+) pocket. Glutamate 78 acts as the Proton donor in catalysis. 2 residues coordinate Zn(2+): cysteine 111 and cysteine 114.

Belongs to the cytidine and deoxycytidylate deaminase family. In terms of assembly, homodimer. It depends on Zn(2+) as a cofactor.

The catalysed reaction is cytidine + H2O + H(+) = uridine + NH4(+). It carries out the reaction 2'-deoxycytidine + H2O + H(+) = 2'-deoxyuridine + NH4(+). Its function is as follows. This enzyme scavenges exogenous and endogenous cytidine and 2'-deoxycytidine for UMP synthesis. This Arabidopsis thaliana (Mouse-ear cress) protein is Cytidine deaminase 7 (CDA7).